A 330-amino-acid chain; its full sequence is Ribosome production factor 1 (330 aa).

2 disordered regions span residues 1–32 and 53–83; these read MKAVKAPVEEMDQAECEVKEEKSASGPCFPPT and EEKRKKRMELKKKKKKERKALDDKAPPKEVP. Residues 55–70 are compositionally biased toward basic residues; it reads KRKKRMELKKKKKKER. Basic and acidic residues predominate over residues 71–83; sequence KALDDKAPPKEVP. The 184-residue stretch at 123-306 folds into the Brix domain; it reads PKVLITTSDR…LRSLQKGTFD (184 aa). Residues 284-301 form an RNA-binding region; sequence VGIQELGPRFTLKLRSLQ.

It is found in the nucleus. It localises to the nucleolus. Functionally, may be required for ribosome biogenesis. The polypeptide is Ribosome production factor 1 (rpf1) (Danio rerio (Zebrafish)).